Here is a 530-residue protein sequence, read N- to C-terminus: Glucose-6-phosphate isomerase (530 aa).

The active-site Proton donor is Glu-347. Active-site residues include His-378 and Lys-493.

It belongs to the GPI family.

The protein resides in the cytoplasm. The catalysed reaction is alpha-D-glucose 6-phosphate = beta-D-fructose 6-phosphate. It participates in carbohydrate biosynthesis; gluconeogenesis. It functions in the pathway carbohydrate degradation; glycolysis; D-glyceraldehyde 3-phosphate and glycerone phosphate from D-glucose: step 2/4. Its function is as follows. Catalyzes the reversible isomerization of glucose-6-phosphate to fructose-6-phosphate. This is Glucose-6-phosphate isomerase from Chlamydia abortus (strain DSM 27085 / S26/3) (Chlamydophila abortus).